We begin with the raw amino-acid sequence, 236 residues long: Probable calcium-binding protein CML30 (236 aa).

The interval valine 43–leucine 64 is disordered. The span at lysine 49 to proline 60 shows a compositional bias: basic and acidic residues. 2 consecutive EF-hand domains span residues aspartate 59 to alanine 94 and serine 96 to arginine 131. Positions 72, 74, 76, 83, 109, 111, 113, and 120 each coordinate Ca(2+). Residues lysine 130 to glutamate 158 are disordered. Residues alanine 146–glutamate 158 are compositionally biased toward acidic residues. EF-hand domains are found at residues glutamate 161–arginine 196 and proline 202–alanine 236. Aspartate 174, asparagine 176, aspartate 178, glutamate 185, aspartate 215, aspartate 217, aspartate 219, methionine 221, and glutamate 226 together coordinate Ca(2+).

Potential calcium sensor. This chain is Probable calcium-binding protein CML30 (CML30), found in Oryza sativa subsp. japonica (Rice).